The chain runs to 129 residues: uncharacterized protein (129 aa).

This is an uncharacterized protein from Clostridium perfringens (strain 13 / Type A).